Reading from the N-terminus, the 76-residue chain is Putative defensin-like protein 121 (76 aa).

An N-terminal signal peptide occupies residues 1 to 26 (MTYKATILAIFMIILVLGIGTKETRG). Cystine bridges form between C30-C74, C39-C59, C44-C68, and C48-C70.

It belongs to the DEFL family.

The protein resides in the secreted. The protein is Putative defensin-like protein 121 (LCR55) of Arabidopsis thaliana (Mouse-ear cress).